Consider the following 185-residue polypeptide: Elongation factor P (185 aa).

The protein belongs to the elongation factor P family.

It localises to the cytoplasm. It functions in the pathway protein biosynthesis; polypeptide chain elongation. Its function is as follows. Involved in peptide bond synthesis. Stimulates efficient translation and peptide-bond synthesis on native or reconstituted 70S ribosomes in vitro. Probably functions indirectly by altering the affinity of the ribosome for aminoacyl-tRNA, thus increasing their reactivity as acceptors for peptidyl transferase. The polypeptide is Elongation factor P (Brevibacillus brevis (strain 47 / JCM 6285 / NBRC 100599)).